Reading from the N-terminus, the 418-residue chain is Putative competence-damage inducible protein (418 aa).

Belongs to the CinA family.

The protein is Putative competence-damage inducible protein of Streptococcus gordonii (strain Challis / ATCC 35105 / BCRC 15272 / CH1 / DL1 / V288).